The sequence spans 212 residues: Proteasome subunit beta type-2 (212 aa).

The protein belongs to the peptidase T1B family. In terms of assembly, the 26S proteasome consists of a 20S proteasome core and two 19S regulatory subunits. The 20S proteasome core is composed of 28 subunits that are arranged in four stacked rings, resulting in a barrel-shaped structure. The two end rings are each formed by seven alpha subunits, and the two central rings are each formed by seven beta subunits. The catalytic chamber with the active sites is on the inside of the barrel.

It localises to the cytoplasm. The protein localises to the nucleus. Non-catalytic component of the proteasome, a multicatalytic proteinase complex which is characterized by its ability to cleave peptides with Arg, Phe, Tyr, Leu, and Glu adjacent to the leaving group at neutral or slightly basic pH. The proteasome has an ATP-dependent proteolytic activity. The sequence is that of Proteasome subunit beta type-2 (PBD1) from Oryza sativa subsp. japonica (Rice).